Consider the following 147-residue polypeptide: NADH-quinone oxidoreductase subunit A (147 aa).

3 helical membrane passes run 16–36 (FAIF…GGWF), 68–88 (FYLV…LFAW), and 97–117 (WVGF…LVYL).

The protein belongs to the complex I subunit 3 family. NDH-1 is composed of 13 different subunits. Subunits NuoA, H, J, K, L, M, N constitute the membrane sector of the complex.

It localises to the cell inner membrane. It catalyses the reaction a quinone + NADH + 5 H(+)(in) = a quinol + NAD(+) + 4 H(+)(out). Functionally, NDH-1 shuttles electrons from NADH, via FMN and iron-sulfur (Fe-S) centers, to quinones in the respiratory chain. The immediate electron acceptor for the enzyme in this species is believed to be ubiquinone. Couples the redox reaction to proton translocation (for every two electrons transferred, four hydrogen ions are translocated across the cytoplasmic membrane), and thus conserves the redox energy in a proton gradient. In Salmonella paratyphi A (strain ATCC 9150 / SARB42), this protein is NADH-quinone oxidoreductase subunit A.